Consider the following 389-residue polypeptide: Lipopolysaccharide assembly protein B (389 aa).

Residues 1–20 form a helical membrane-spanning segment; that stretch reads MLELLFLLLPVAAAYGWYMG. Over 21–389 the chain is Cytoplasmic; that stretch reads RRSAQQNKQD…IKPIRGLDGL (369 aa). TPR repeat units follow at residues 35-68, 69-102, 107-140, 142-174, 180-213, 214-247, and 249-282; these read LSRD…DTGT, VEAH…ASLT, LLAI…TDFR, GALQ…GKDK, AHFY…DKNS, ARVS…DREL, and SETL…NTGA. Residues Cys357, Cys360, Cys371, and Cys374 each contribute to the Fe cation site.

It belongs to the LapB family.

The protein localises to the cell inner membrane. In terms of biological role, modulates cellular lipopolysaccharide (LPS) levels by regulating LpxC, which is involved in lipid A biosynthesis. May act by modulating the proteolytic activity of FtsH towards LpxC. May also coordinate assembly of proteins involved in LPS synthesis at the plasma membrane. The protein is Lipopolysaccharide assembly protein B of Escherichia coli O157:H7.